Consider the following 227-residue polypeptide: Probable GTP-binding protein EngB (227 aa).

The region spanning 41 to 216 (GRPEVAFAGR…RAEIARFAVP (176 aa)) is the EngB-type G domain. GTP contacts are provided by residues 49-56 (GRSNVGKS), 76-80 (GRTKQ), 94-97 (DMPG), 161-164 (TKCD), and 195-197 (TSS). Mg(2+)-binding residues include Ser56 and Thr78.

This sequence belongs to the TRAFAC class TrmE-Era-EngA-EngB-Septin-like GTPase superfamily. EngB GTPase family. Mg(2+) is required as a cofactor.

Functionally, necessary for normal cell division and for the maintenance of normal septation. The chain is Probable GTP-binding protein EngB from Gluconobacter oxydans (strain 621H) (Gluconobacter suboxydans).